The primary structure comprises 103 residues: MSIAMTAPTTGVAPMTCETRLPAVPCHVGDPDLWFAENPGDLERAKALCAGCPIRVQCLTAALERQEPWGVWGGEILDRGSIVARKRPRGRPRKDSGGNPAAA.

Positions 17, 49, 52, and 58 each coordinate [4Fe-4S] cluster. Positions 25–82 constitute a 4Fe-4S Wbl-type domain; sequence PCHVGDPDLWFAENPGDLERAKALCAGCPIRVQCLTAALERQEPWGVWGGEILDRGSI. Positions 82–103 are disordered; that stretch reads IVARKRPRGRPRKDSGGNPAAA.

Belongs to the WhiB family. [4Fe-4S] cluster serves as cofactor. In terms of processing, the Fe-S cluster can be nitrosylated by nitric oxide (NO). Post-translationally, upon Fe-S cluster removal intramolecular disulfide bonds are formed.

It is found in the cytoplasm. Its function is as follows. Acts as a transcriptional regulator. Probably redox-responsive. The apo- but not holo-form probably binds DNA. Participates in maintaining a reduced cytoplasmic (MSH/MSSM) environment under normal growth conditions and directly or indirectly controls the concentration of mycothiol (MSH + MSSM). This chain is Transcriptional regulator WhiB7 (whiB7), found in Mycolicibacterium smegmatis (strain ATCC 700084 / mc(2)155) (Mycobacterium smegmatis).